The following is a 560-amino-acid chain: Membrane protein insertase YidC (560 aa).

Transmembrane regions (helical) follow at residues Ile-5–Phe-25, Ala-334–Phe-354, Tyr-357–Phe-377, Leu-431–Ile-451, Leu-476–Leu-496, and Phe-522–Trp-542.

The protein belongs to the OXA1/ALB3/YidC family. Type 1 subfamily. In terms of assembly, interacts with the Sec translocase complex via SecD. Specifically interacts with transmembrane segments of nascent integral membrane proteins during membrane integration.

It is found in the cell inner membrane. Its function is as follows. Required for the insertion and/or proper folding and/or complex formation of integral membrane proteins into the membrane. Involved in integration of membrane proteins that insert both dependently and independently of the Sec translocase complex, as well as at least some lipoproteins. Aids folding of multispanning membrane proteins. The polypeptide is Membrane protein insertase YidC (Rickettsia rickettsii (strain Iowa)).